Consider the following 253-residue polypeptide: Phosphate import ATP-binding protein PstB (253 aa).

Residues 8 to 248 enclose the ABC transporter domain; it reads IQVRDLDLFY…PRDKRTEDYI (241 aa). ATP is bound at residue 40–47; sequence GPSGCGKS.

Belongs to the ABC transporter superfamily. Phosphate importer (TC 3.A.1.7) family. In terms of assembly, the complex is composed of two ATP-binding proteins (PstB), two transmembrane proteins (PstC and PstA) and a solute-binding protein (PstS).

It is found in the cell membrane. The enzyme catalyses phosphate(out) + ATP + H2O = ADP + 2 phosphate(in) + H(+). In terms of biological role, part of the ABC transporter complex PstSACB involved in phosphate import. Responsible for energy coupling to the transport system. This is Phosphate import ATP-binding protein PstB from Clostridium perfringens (strain ATCC 13124 / DSM 756 / JCM 1290 / NCIMB 6125 / NCTC 8237 / Type A).